The following is a 542-amino-acid chain: CTP synthase (542 aa).

Residues 1–265 (MARYVFITGG…DSEVLCAFGI (265 aa)) form an amidoligase domain region. Ser13 is a CTP binding site. Ser13 serves as a coordination point for UTP. 14–19 (SLGKGI) is a binding site for ATP. Tyr54 provides a ligand contact to L-glutamine. Asp71 provides a ligand contact to ATP. Mg(2+)-binding residues include Asp71 and Glu139. CTP is bound by residues 146 to 148 (DIE), 186 to 191 (KTKPTQ), and Lys222. UTP-binding positions include 186 to 191 (KTKPTQ) and Lys222. A Glutamine amidotransferase type-1 domain is found at 291–541 (TIAVVGKYTG…IEAAVEQSRL (251 aa)). Residue Ala353 coordinates L-glutamine. The active-site Nucleophile; for glutamine hydrolysis is Cys380. L-glutamine-binding positions include 381-384 (FGMQ), Glu404, and Arg469. Active-site residues include His514 and Glu516.

This sequence belongs to the CTP synthase family. In terms of assembly, homotetramer.

It carries out the reaction UTP + L-glutamine + ATP + H2O = CTP + L-glutamate + ADP + phosphate + 2 H(+). The enzyme catalyses L-glutamine + H2O = L-glutamate + NH4(+). The catalysed reaction is UTP + NH4(+) + ATP = CTP + ADP + phosphate + 2 H(+). Its pathway is pyrimidine metabolism; CTP biosynthesis via de novo pathway; CTP from UDP: step 2/2. Allosterically activated by GTP, when glutamine is the substrate; GTP has no effect on the reaction when ammonia is the substrate. The allosteric effector GTP functions by stabilizing the protein conformation that binds the tetrahedral intermediate(s) formed during glutamine hydrolysis. Inhibited by the product CTP, via allosteric rather than competitive inhibition. Its function is as follows. Catalyzes the ATP-dependent amination of UTP to CTP with either L-glutamine or ammonia as the source of nitrogen. Regulates intracellular CTP levels through interactions with the four ribonucleotide triphosphates. This chain is CTP synthase, found in Bartonella tribocorum (strain CIP 105476 / IBS 506).